A 317-amino-acid polypeptide reads, in one-letter code: Beta-sarcoglycan (317 aa).

The disordered stretch occupies residues 1 to 31 (MAAAAAATEQQSSNGPVKKSMREKAVERRNV). Residues 1 to 64 (MAAAAAATEQ…GLRGRKGNLA (64 aa)) are Cytoplasmic-facing. Residues 20 to 31 (SMREKAVERRNV) show a composition bias toward basic and acidic residues. Residues 65–85 (ICVIVLLFILAVINLIITLVI) form a helical; Signal-anchor for type II membrane protein membrane-spanning segment. Topologically, residues 86–317 (WAVIRIGPNG…TSDNPCGDLY (232 aa)) are extracellular. Residues Asn-157, Asn-210, and Asn-257 are each glycosylated (N-linked (GlcNAc...) asparagine). 2 disulfide bridges follow: Cys-287–Cys-313 and Cys-289–Cys-306.

This sequence belongs to the sarcoglycan beta/delta/gamma/zeta family. Cross-link to form 2 major subcomplexes: one consisting of SGCB, SGCD and SGCG and the other consisting of SGCB and SGCD. The association between SGCB and SGCG is particularly strong while SGCA is loosely associated with the other sarcoglycans. Disulfide bonds are present.

The protein localises to the cell membrane. The protein resides in the sarcolemma. Its subcellular location is the cytoplasm. It is found in the cytoskeleton. Component of the sarcoglycan complex, a subcomplex of the dystrophin-glycoprotein complex which forms a link between the F-actin cytoskeleton and the extracellular matrix. This Bos taurus (Bovine) protein is Beta-sarcoglycan (SGCB).